A 413-amino-acid chain; its full sequence is Low-salt glycan biosynthesis hexosyltransferase Agl6 (413 aa).

The disordered stretch occupies residues M1–I27. Residues Q16–S25 are compositionally biased toward polar residues. The next 4 helical transmembrane spans lie at L270–W290, T304–F324, I355–V375, and V389–G409.

Belongs to the glycosyltransferase 2 family.

The protein localises to the membrane. Its pathway is protein modification; protein glycosylation. It functions in the pathway cell surface structure biogenesis; S-layer biogenesis. Functionally, hexosyltransferase involved in N-glycan biosynthetic pathway that takes place under low-salt conditions (1.75 M instead of 3.4 M). Participates in the formation of the tetrasaccharide present at 'Asn-532' of S-layer glycoprotein Csg, consisting of a sulfated hexose, 2 hexoses and rhamnose. Together with Agl5, mediates the addition of sugars 1 and 2 to dolichol phosphate in the tetrasaccharide. The protein is Low-salt glycan biosynthesis hexosyltransferase Agl6 (agl6) of Haloferax volcanii (strain ATCC 29605 / DSM 3757 / JCM 8879 / NBRC 14742 / NCIMB 2012 / VKM B-1768 / DS2) (Halobacterium volcanii).